Reading from the N-terminus, the 207-residue chain is Large ribosomal subunit protein uL4 (207 aa).

A disordered region spans residues 50–75; the sequence is KTKTVSEVSGTTKKPFKQKGTGNARQ.

The protein belongs to the universal ribosomal protein uL4 family. Part of the 50S ribosomal subunit.

In terms of biological role, one of the primary rRNA binding proteins, this protein initially binds near the 5'-end of the 23S rRNA. It is important during the early stages of 50S assembly. It makes multiple contacts with different domains of the 23S rRNA in the assembled 50S subunit and ribosome. Forms part of the polypeptide exit tunnel. The polypeptide is Large ribosomal subunit protein uL4 (Rickettsia akari (strain Hartford)).